The primary structure comprises 333 residues: Diacylglycerol acyltransferase/mycolyltransferase Ag85C (333 aa).

A signal peptide spans 1–44 (MKFLQQMRKLFGLAAKFPARLTIAVIGTALLAGLVGVVGDTAIA). 86-87 (LR) contributes to the substrate binding site. A fibronectin-binding region spans residues 102-112 (FEEYYHSGLSV). Substrate is bound by residues serine 170 and asparagine 198. Serine 170 functions as the Nucleophile in the catalytic mechanism. Glutamate 274 is a catalytic residue. Substrate-binding positions include 276 to 279 (LTLS) and 306 to 308 (HSW). The active site involves histidine 306.

Belongs to the mycobacterial A85 antigen family. As to quaternary structure, homodimer.

It localises to the secreted. The enzyme catalyses an acyl-CoA + a 1,2-diacyl-sn-glycerol = a triacyl-sn-glycerol + CoA. The catalysed reaction is 2 alpha,alpha'-trehalose 6-mycolate = alpha,alpha'-trehalose 6,6'-bismycolate + alpha,alpha-trehalose. Functionally, the antigen 85 proteins (FbpA, FbpB, FbpC) are responsible for the high affinity of mycobacteria to fibronectin, a large adhesive glycoprotein, which facilitates the attachment of M.tuberculosis to murine alveolar macrophages (AMs). They also help to maintain the integrity of the cell wall by catalyzing the transfer of mycolic acids to cell wall arabinogalactan and through the synthesis of alpha,alpha-trehalose dimycolate (TDM, cord factor). They catalyze the transfer of a mycoloyl residue from one molecule of alpha,alpha-trehalose monomycolate (TMM) to another TMM, leading to the formation of TDM. The sequence is that of Diacylglycerol acyltransferase/mycolyltransferase Ag85C (fbpC) from Mycobacterium leprae (strain TN).